The sequence spans 162 residues: ATP synthase subunit b', chloroplastic (162 aa).

A helical transmembrane segment spans residues 26-46; sequence ATLPLQALQFILLTVLLTFIF.

The protein belongs to the ATPase B chain family. As to quaternary structure, F-type ATPases have 2 components, F(1) - the catalytic core - and F(0) - the membrane proton channel. F(1) has five subunits: alpha(3), beta(3), gamma(1), delta(1), epsilon(1). F(0) has four main subunits: a(1), b(1), b'(1) and c(10-14). The alpha and beta chains form an alternating ring which encloses part of the gamma chain. F(1) is attached to F(0) by a central stalk formed by the gamma and epsilon chains, while a peripheral stalk is formed by the delta, b and b' chains.

The protein resides in the plastid. The protein localises to the chloroplast thylakoid membrane. In terms of biological role, f(1)F(0) ATP synthase produces ATP from ADP in the presence of a proton or sodium gradient. F-type ATPases consist of two structural domains, F(1) containing the extramembraneous catalytic core and F(0) containing the membrane proton channel, linked together by a central stalk and a peripheral stalk. During catalysis, ATP synthesis in the catalytic domain of F(1) is coupled via a rotary mechanism of the central stalk subunits to proton translocation. Functionally, component of the F(0) channel, it forms part of the peripheral stalk, linking F(1) to F(0). The b'-subunit is a diverged and duplicated form of b found in plants and photosynthetic bacteria. The polypeptide is ATP synthase subunit b', chloroplastic (Emiliania huxleyi (Coccolithophore)).